The primary structure comprises 810 residues: Transducer protein CosT (810 aa).

The Cytoplasmic portion of the chain corresponds to 1-38 (MSEPTADAGDNSPSSTDTAPLDRVKAIALLPLRSYLVK). Residues 39 to 59 (FAVALLVILVIIAAGGFWVQA) traverse the membrane as a helical segment. At 60–323 (DATATLEANT…AFALSNQIRT (264 aa)) the chain is on the extracellular side. The helical transmembrane segment at 324–344 (GILGFILVALVGVVLVGGTIG) threads the bilayer. Residues 345–397 (RNTAAAVQSLSAAAAEIEAGNYDVDVASSRRDEIGQLFASIGSMRDALVTQID) form the HAMP 1 domain. Residues 345 to 810 (RNTAAAVQSL…DRDVTPTQTD (466 aa)) are Cytoplasmic-facing. The tract at residues 403–427 (REQATEAQQDAEAERERAEDARERA) is disordered. The segment covering 414-427 (EAERERAEDARERA) has biased composition (basic and acidic residues). An HAMP 2 domain is found at 439–493 (AELEAQAERYSDVMAACADGDLTRRMPADDTDNEAMAAIAASFNEMLAQWEHTII). Residues 512 to 748 (GAADAERASG…EAVSMTEEVA (237 aa)) enclose the Methyl-accepting transducer domain. Glu-556 and Glu-739 each carry glutamate methyl ester (Glu). The segment at 751-784 (SDSTAGEAQSVSAAAEEQAASMSEISDSVESLSG) is disordered. The segment covering 755–774 (AGEAQSVSAAAEEQAASMSE) has biased composition (low complexity). Over residues 775–784 (ISDSVESLSG) the composition is skewed to polar residues.

This sequence belongs to the methyl-accepting chemotaxis (MCP) protein family. Methylated by CheR.

The protein resides in the cell membrane. In terms of biological role, mediates chemotaxis towards compatible osmolytes. Probably transduces the signal from the substrate-binding protein CosB to the histidine kinase CheA. The sequence is that of Transducer protein CosT (cosT) from Halobacterium salinarum (strain ATCC 700922 / JCM 11081 / NRC-1) (Halobacterium halobium).